The following is a 102-amino-acid chain: Aspartyl/glutamyl-tRNA(Asn/Gln) amidotransferase subunit C (102 aa).

Belongs to the GatC family. As to quaternary structure, heterotrimer of A, B and C subunits.

It catalyses the reaction L-glutamyl-tRNA(Gln) + L-glutamine + ATP + H2O = L-glutaminyl-tRNA(Gln) + L-glutamate + ADP + phosphate + H(+). It carries out the reaction L-aspartyl-tRNA(Asn) + L-glutamine + ATP + H2O = L-asparaginyl-tRNA(Asn) + L-glutamate + ADP + phosphate + 2 H(+). In terms of biological role, allows the formation of correctly charged Asn-tRNA(Asn) or Gln-tRNA(Gln) through the transamidation of misacylated Asp-tRNA(Asn) or Glu-tRNA(Gln) in organisms which lack either or both of asparaginyl-tRNA or glutaminyl-tRNA synthetases. The reaction takes place in the presence of glutamine and ATP through an activated phospho-Asp-tRNA(Asn) or phospho-Glu-tRNA(Gln). This chain is Aspartyl/glutamyl-tRNA(Asn/Gln) amidotransferase subunit C, found in Bordetella parapertussis (strain 12822 / ATCC BAA-587 / NCTC 13253).